The following is a 199-amino-acid chain: Transcriptional regulatory protein EntR (199 aa).

A Response regulatory domain is found at Lys3 to Leu124. Asp8 is subject to 4-aspartylphosphate. Residues Pro133 to Gly198 form the HTH luxR-type domain. Residues Asn157 to Arg176 constitute a DNA-binding region (H-T-H motif).

May serve to repress the entericidin locus in C.freundii. This Citrobacter freundii protein is Transcriptional regulatory protein EntR (ecnR).